Reading from the N-terminus, the 100-residue chain is MEQQQQQLRNLRDFLLVYNRMTELCFQRCVPSLHHRALDAEEEACLHSCAGKLIHSNHRLMAAYVHLMPALVQRRIADYEAASAAPGIPAEQTRDSPSGS.

Positions 25–49 match the Twin CX3C motif motif; the sequence is CFQRCVPSLHHRALDAEEEACLHSC. Cystine bridges form between C25–C49 and C29–C45.

It belongs to the small Tim family. In terms of assembly, component of the TIM22 complex, which core is composed of TIMM22, associated with TIMM10 (TIMM10A and/or TIMM10B), TIMM9, AGK and TIMM29.

It is found in the mitochondrion inner membrane. Component of the TIM22 complex, a complex that mediates the import and insertion of multi-pass transmembrane proteins into the mitochondrial inner membrane. The TIM22 complex forms a twin-pore translocase that uses the membrane potential as the external driving force. In the TIM22 complex, it may act as a docking point for the soluble 70 kDa complex that guides the target proteins in transit through the aqueous mitochondrial intermembrane space. The chain is Mitochondrial import inner membrane translocase subunit Tim10 B (Timm10b) from Mus musculus (Mouse).